The chain runs to 548 residues: Membrane protein insertase YidC (548 aa).

The chain crosses the membrane as a helical span at residues 6–26 (NLLVIALLFVSFMIWQAWEQD). Residues 28–55 (NPQPQAQQTTQTTTTAAGSAADQGVPAS) form a disordered region. Residues 30–50 (QPQAQQTTQTTTTAAGSAADQ) show a composition bias toward low complexity. A run of 4 helical transmembrane segments spans residues 350 to 370 (FVGN…GIMY), 420 to 440 (LGGC…YYML), 458 to 478 (LSAQ…MFFI), and 499 to 519 (PVIF…YYIV).

This sequence belongs to the OXA1/ALB3/YidC family. Type 1 subfamily. Interacts with the Sec translocase complex via SecD. Specifically interacts with transmembrane segments of nascent integral membrane proteins during membrane integration.

The protein localises to the cell inner membrane. Functionally, required for the insertion and/or proper folding and/or complex formation of integral membrane proteins into the membrane. Involved in integration of membrane proteins that insert both dependently and independently of the Sec translocase complex, as well as at least some lipoproteins. Aids folding of multispanning membrane proteins. In Escherichia coli O127:H6 (strain E2348/69 / EPEC), this protein is Membrane protein insertase YidC.